The chain runs to 1801 residues: Protein mono-ADP-ribosyltransferase PARP14 (1801 aa).

Ser33 is subject to Phosphoserine. The disordered stretch occupies residues 109–132 (SKTKEDVKEPDVSEELDTKLPLDG). Macro domains follow at residues 791 to 978 (KCFS…KTVF), 1003 to 1190 (WEKG…ARRA), and 1216 to 1387 (DSGV…KKRE). A glycoprotein contacts are provided by residues Asn824, Leu833, 922 to 926 (SSGVF), Asp961, 1023 to 1024 (VQ), Ser1034, 1046 to 1049 (LSKS), 1133 to 1137 (GTGNL), 1175 to 1178 (DHEN), 1235 to 1236 (DI), Ser1247, Val1258, 1332 to 1336 (GTGNA), and Phe1371. Residues Ser1403 and Ser1411 each carry the phosphoserine modification. Residues 1523–1601 (EQESRADCIS…SLSVQRLTKS (79 aa)) enclose the WWE domain. Residues 1605–1801 (IPAHWSDMKQ…YPEYLITFRK (197 aa)) form the PARP catalytic domain.

The protein belongs to the ARTD/PARP family. In terms of assembly, interacts with STAT6. Interacts with PARP10. Interacts with PARP9 in IFNG-stimulated macrophages; the interaction prevents PARP14-mediated STAT1 and STAT6 ADP-riboslylation. Post-translationally, auto-ADP-ribosylated. As to expression, expressed in macrophages.

The protein localises to the nucleus. The protein resides in the cytoplasm. It carries out the reaction L-glutamyl-[protein] + NAD(+) = 5-O-(ADP-D-ribosyl)-L-glutamyl-[protein] + nicotinamide. Its function is as follows. ADP-ribosyltransferase that mediates mono-ADP-ribosylation of glutamate residues on target proteins. In contrast to PARP1 and PARP2, it is not able to mediate poly-ADP-ribosylation. Has been shown to catalyze the mono-ADP-ribosylation of STAT1 at 'Glu-657' and 'Glu-705', thus decreasing STAT1 phosphorylation which negatively regulates pro-inflammatory cytokine production in macrophages in response to IFNG stimulation. However, the role of ADP-ribosylation in the prevention of STAT1 phosphorylation has been called into question and it has been suggested that the inhibition of phosphorylation may be the result of sumoylation of STAT1 'Lys-703'. Mono-ADP-ribosylates STAT6; enhancing STAT6-dependent transcription. In macrophages, positively regulates MRC1 expression in response to IL4 stimulation by promoting STAT6 phosphorylation. Mono-ADP-ribosylates PARP9. The sequence is that of Protein mono-ADP-ribosyltransferase PARP14 from Homo sapiens (Human).